A 391-amino-acid chain; its full sequence is Multidrug resistance protein MdtL (391 aa).

Transmembrane regions (helical) follow at residues 4 to 24 (FLIC…MYLV), 42 to 62 (IAFS…GKVA), 69 to 89 (PVAI…SLAE), 93 to 113 (LFLA…VVAF), 131 to 151 (LLNG…HLIM), 158 to 178 (SLFW…LFIL), 203 to 222 (FFLS…LTFV), 245 to 265 (ALTA…LGIF), 269 to 289 (TLMI…AVSP), 293 to 313 (VSLF…GVAM), 331 to 351 (LGIA…VVGI), and 356 to 376 (MLIG…MFVA).

Belongs to the major facilitator superfamily. DHA1 family. MdtL (TC 2.A.1.2.22) subfamily.

It localises to the cell inner membrane. Its function is as follows. Confers resistance to chloramphenicol. The polypeptide is Multidrug resistance protein MdtL (Escherichia coli O45:K1 (strain S88 / ExPEC)).